Consider the following 86-residue polypeptide: Mu-theraphotoxin-Cg2a 1 (86 aa).

The first 21 residues, 1–21 (MKVSVVITLAVLGIMFVWASA), serve as a signal peptide directing secretion. Positions 22 to 50 (AELEERGSDQRDSPAWLKSMERIFQSEER) are excised as a propeptide. 3 disulfides stabilise this stretch: Cys-52/Cys-66, Cys-59/Cys-71, and Cys-65/Cys-78. Phenylalanine amide is present on Phe-84.

This sequence belongs to the neurotoxin 10 (Hwtx-1) family. 37 (Jztx-31) subfamily. As to expression, expressed by the venom gland.

The protein localises to the secreted. In terms of biological role, inhibits both peak current and fast inactivation of voltage-gated sodium channels (Nav) channels. Inhibits the inactivation of Nav on DRG neurons (EC(50)=1.77 uM) and peak current of cardiac myocytes (IC(50)=0.90 uM). The polypeptide is Mu-theraphotoxin-Cg2a 1 (Chilobrachys guangxiensis (Chinese earth tiger tarantula)).